The primary structure comprises 231 residues: Uracil-DNA glycosylase (231 aa).

Catalysis depends on D71, which acts as the Proton acceptor.

It belongs to the uracil-DNA glycosylase (UDG) superfamily. UNG family.

The protein localises to the cytoplasm. The enzyme catalyses Hydrolyzes single-stranded DNA or mismatched double-stranded DNA and polynucleotides, releasing free uracil.. Its function is as follows. Excises uracil residues from the DNA which can arise as a result of misincorporation of dUMP residues by DNA polymerase or due to deamination of cytosine. The polypeptide is Uracil-DNA glycosylase (Pseudomonas aeruginosa (strain UCBPP-PA14)).